The primary structure comprises 183 residues: ATP synthase subunit b, chloroplastic (183 aa).

Residues 25 to 45 (DILATNLINLTVVVGVLIFFG) traverse the membrane as a helical segment.

The protein belongs to the ATPase B chain family. In terms of assembly, F-type ATPases have 2 components, F(1) - the catalytic core - and F(0) - the membrane proton channel. F(1) has five subunits: alpha(3), beta(3), gamma(1), delta(1), epsilon(1). F(0) has four main subunits: a(1), b(1), b'(1) and c(10-14). The alpha and beta chains form an alternating ring which encloses part of the gamma chain. F(1) is attached to F(0) by a central stalk formed by the gamma and epsilon chains, while a peripheral stalk is formed by the delta, b and b' chains.

Its subcellular location is the plastid. The protein resides in the chloroplast thylakoid membrane. Its function is as follows. F(1)F(0) ATP synthase produces ATP from ADP in the presence of a proton or sodium gradient. F-type ATPases consist of two structural domains, F(1) containing the extramembraneous catalytic core and F(0) containing the membrane proton channel, linked together by a central stalk and a peripheral stalk. During catalysis, ATP synthesis in the catalytic domain of F(1) is coupled via a rotary mechanism of the central stalk subunits to proton translocation. Functionally, component of the F(0) channel, it forms part of the peripheral stalk, linking F(1) to F(0). This is ATP synthase subunit b, chloroplastic from Zea mays (Maize).